We begin with the raw amino-acid sequence, 114 residues long: Large ribosomal subunit protein uL22 (114 aa).

It belongs to the universal ribosomal protein uL22 family. Part of the 50S ribosomal subunit.

Its function is as follows. This protein binds specifically to 23S rRNA; its binding is stimulated by other ribosomal proteins, e.g. L4, L17, and L20. It is important during the early stages of 50S assembly. It makes multiple contacts with different domains of the 23S rRNA in the assembled 50S subunit and ribosome. In terms of biological role, the globular domain of the protein is located near the polypeptide exit tunnel on the outside of the subunit, while an extended beta-hairpin is found that lines the wall of the exit tunnel in the center of the 70S ribosome. This is Large ribosomal subunit protein uL22 from Ehrlichia canis (strain Jake).